Consider the following 339-residue polypeptide: Ketol-acid reductoisomerase (NADP(+)) (339 aa).

Residues 1-182 enclose the KARI N-terminal Rossmann domain; the sequence is MRVYYDRDAD…GGGRSGIIET (182 aa). Residues 24–27, Arg48, Ser51, Ser53, and 83–86 each bind NADP(+); these read YGSQ and DELQ. His108 is a catalytic residue. Residue Gly134 participates in NADP(+) binding. The KARI C-terminal knotted domain occupies 183-328; sequence TFREECETDL…EKLRGMMPWI (146 aa). Mg(2+) is bound by residues Asp191, Glu195, Glu227, and Glu231. Residue Ser252 participates in substrate binding.

Belongs to the ketol-acid reductoisomerase family. The cofactor is Mg(2+).

It carries out the reaction (2R)-2,3-dihydroxy-3-methylbutanoate + NADP(+) = (2S)-2-acetolactate + NADPH + H(+). The enzyme catalyses (2R,3R)-2,3-dihydroxy-3-methylpentanoate + NADP(+) = (S)-2-ethyl-2-hydroxy-3-oxobutanoate + NADPH + H(+). Its pathway is amino-acid biosynthesis; L-isoleucine biosynthesis; L-isoleucine from 2-oxobutanoate: step 2/4. It participates in amino-acid biosynthesis; L-valine biosynthesis; L-valine from pyruvate: step 2/4. Functionally, involved in the biosynthesis of branched-chain amino acids (BCAA). Catalyzes an alkyl-migration followed by a ketol-acid reduction of (S)-2-acetolactate (S2AL) to yield (R)-2,3-dihydroxy-isovalerate. In the isomerase reaction, S2AL is rearranged via a Mg-dependent methyl migration to produce 3-hydroxy-3-methyl-2-ketobutyrate (HMKB). In the reductase reaction, this 2-ketoacid undergoes a metal-dependent reduction by NADPH to yield (R)-2,3-dihydroxy-isovalerate. The polypeptide is Ketol-acid reductoisomerase (NADP(+)) (Magnetospirillum molischianum (Rhodospirillum molischianum)).